The primary structure comprises 520 residues: L-cysteine:1D-myo-inositol 2-amino-2-deoxy-alpha-D-glucopyranoside ligase (520 aa).

A Zn(2+)-binding site is contributed by Cys-48. Residues 48–51, Thr-63, and 86–88 contribute to the L-cysteinyl-5'-AMP site; these read CGIT and NVT. A 'HIGH' region motif is present at residues 50–60; it reads ITPYDSTHLGH. The 'ERGGDP' region motif lies at 192–197; it reads ERGGDP. Trp-232 contributes to the L-cysteinyl-5'-AMP binding site. Cys-236 serves as a coordination point for Zn(2+). 254–256 contacts L-cysteinyl-5'-AMP; sequence GED. His-261 lines the Zn(2+) pocket. Ile-288 is a binding site for L-cysteinyl-5'-AMP. Residues 294-298 carry the 'KMSKS' region motif; sequence KMSKS.

This sequence belongs to the class-I aminoacyl-tRNA synthetase family. MshC subfamily. As to quaternary structure, monomer. It depends on Zn(2+) as a cofactor.

The catalysed reaction is 1D-myo-inositol 2-amino-2-deoxy-alpha-D-glucopyranoside + L-cysteine + ATP = 1D-myo-inositol 2-(L-cysteinylamino)-2-deoxy-alpha-D-glucopyranoside + AMP + diphosphate + H(+). In terms of biological role, catalyzes the ATP-dependent condensation of GlcN-Ins and L-cysteine to form L-Cys-GlcN-Ins. The chain is L-cysteine:1D-myo-inositol 2-amino-2-deoxy-alpha-D-glucopyranoside ligase from Corynebacterium kroppenstedtii (strain DSM 44385 / JCM 11950 / CIP 105744 / CCUG 35717).